The sequence spans 108 residues: Alkyltransferase-like protein 1 (108 aa).

It belongs to the MGMT family. ATL subfamily.

Its function is as follows. Involved in DNA damage recognition. Binds DNA containing O(6)-methylguanine and larger O(6)-alkylguanine adducts. The DNA is bent, the damaged base is rotated out of the DNA duplex into a hydrophobic binding pocket (nucleotide flipping), with Arg-39 donating a hydrogen bond to the orphaned cytosine to stabilize the extrahelical DNA conformation. This structural change in DNA presents the lesion to the nucleotide excision repair (NER) pathway. The affinity for O(6)-alkylguanine adducts increases with the size of the alkyl group. Low affinity small O(6)-alkylguanines are directed to the global genome repair pathway of NER via rhp7-rhp16 and rhp41-rhp23, while strong binding to bulky O(6)-alkylguanines stalls the transcription machinery and diverts the damage to the transcription-coupled repair pathway of NER via rhp26. This is Alkyltransferase-like protein 1 from Schizosaccharomyces pombe (strain 972 / ATCC 24843) (Fission yeast).